Reading from the N-terminus, the 1306-residue chain is Kinesin-like protein KIN-14L (1306 aa).

Residues 142 to 456 form the Kinesin motor domain; it reads NVKVFCRSRP…LSFSARAKNA (315 aa). 223–230 provides a ligand contact to ATP; that stretch reads GQSRSGKT. Coiled-coil stretches lie at residues 466 to 507 and 540 to 595; these read IKKW…ANDQ and HRIE…ALNS. Polar residues-rich tracts occupy residues 592–611 and 660–677; these read ALNSSDARSTIGSESASVIS and LGSSPQAPSPSNKQTNAQ. Disordered regions lie at residues 592–627, 657–710, and 849–881; these read ALNSSDARSTIGSESASVISTPKMMESTADSSSVTK, KSGL…SGAI, and KSHTSRSRSSSRGSSPGRSPVHHHHDHGSRTSL. The span at 855-867 shows a compositional bias: low complexity; the sequence is SRSSSRGSSPGRS.

It belongs to the TRAFAC class myosin-kinesin ATPase superfamily. Kinesin family. KIN-14 subfamily.

In Oryza sativa subsp. japonica (Rice), this protein is Kinesin-like protein KIN-14L.